The primary structure comprises 205 residues: Regulator of G-protein signaling 4 (205 aa).

S-palmitoyl cysteine attachment occurs at residues C2, C12, and C95. Residues 62–178 (SLENLISHEC…LKSRFYLDLV (117 aa)) form the RGS domain.

Palmitoylated on Cys-2 and/or Cys-12. Post-translationally, phosphorylated by cyclic GMP-dependent protein kinase.

Its function is as follows. Inhibits signal transduction by increasing the GTPase activity of G protein alpha subunits thereby driving them into their inactive GDP-bound form. Activity on G(z)-alpha is inhibited by phosphorylation of the G-protein. Activity on G(z)-alpha and G(i)-alpha-1 is inhibited by palmitoylation of the G-protein. This chain is Regulator of G-protein signaling 4 (RGS4), found in Bos taurus (Bovine).